A 430-amino-acid polypeptide reads, in one-letter code: Serine--tRNA ligase (430 aa).

235–237 contributes to the L-serine binding site; that stretch reads TAE. ATP contacts are provided by residues 266-268 and valine 282; that span reads RRE. Residue glutamate 289 participates in L-serine binding. Residue 353–356 coordinates ATP; it reads EASS. Serine 389 lines the L-serine pocket.

It belongs to the class-II aminoacyl-tRNA synthetase family. Type-1 seryl-tRNA synthetase subfamily. In terms of assembly, homodimer. The tRNA molecule binds across the dimer.

It localises to the cytoplasm. The catalysed reaction is tRNA(Ser) + L-serine + ATP = L-seryl-tRNA(Ser) + AMP + diphosphate + H(+). It catalyses the reaction tRNA(Sec) + L-serine + ATP = L-seryl-tRNA(Sec) + AMP + diphosphate + H(+). It functions in the pathway aminoacyl-tRNA biosynthesis; selenocysteinyl-tRNA(Sec) biosynthesis; L-seryl-tRNA(Sec) from L-serine and tRNA(Sec): step 1/1. In terms of biological role, catalyzes the attachment of serine to tRNA(Ser). Is also able to aminoacylate tRNA(Sec) with serine, to form the misacylated tRNA L-seryl-tRNA(Sec), which will be further converted into selenocysteinyl-tRNA(Sec). The protein is Serine--tRNA ligase of Chlorobium phaeovibrioides (strain DSM 265 / 1930) (Prosthecochloris vibrioformis (strain DSM 265)).